Reading from the N-terminus, the 99-residue chain is AEVLLGSSDGGLVFEPSTFSVASGEKIVFKNNAGFPHNVVFDEDEIPAGVDASKISMSEEDLLNAPGETYAVTLTEKGTYSFYCAPHQGAGMVGKVTVN.

The region spanning 1-99 is the Plastocyanin-like domain; sequence AEVLLGSSDG…AGMVGKVTVN (99 aa). Cu cation-binding residues include His-37, Cys-84, His-87, and Met-92.

Belongs to the plastocyanin family. Cu(2+) is required as a cofactor.

Its subcellular location is the plastid. It is found in the chloroplast thylakoid membrane. Its function is as follows. Participates in electron transfer between P700 and the cytochrome b6-f complex in photosystem I. The chain is Plastocyanin (PETE) from Lactuca sativa (Garden lettuce).